A 207-amino-acid polypeptide reads, in one-letter code: DNA-directed RNA polymerase subunit alpha (207 aa).

It belongs to the RNA polymerase alpha chain family. As to quaternary structure, in plastids the minimal PEP RNA polymerase catalytic core is composed of four subunits: alpha, beta, beta', and beta''. When a (nuclear-encoded) sigma factor is associated with the core the holoenzyme is formed, which can initiate transcription.

It is found in the plastid. Its subcellular location is the chloroplast. It carries out the reaction RNA(n) + a ribonucleoside 5'-triphosphate = RNA(n+1) + diphosphate. In terms of biological role, DNA-dependent RNA polymerase catalyzes the transcription of DNA into RNA using the four ribonucleoside triphosphates as substrates. The chain is DNA-directed RNA polymerase subunit alpha (rpoA) from Euglena myxocylindracea.